The primary structure comprises 783 residues: ATP-dependent 6-phosphofructokinase (783 aa).

Over residues methionine 1–proline 10 the composition is skewed to pro residues. The segment at methionine 1–threonine 20 is disordered. Residues methionine 1 to threonine 389 form an N-terminal catalytic PFK domain 1 region. ATP contacts are provided by residues glycine 23, arginine 86 to cysteine 87, and glycine 116 to serine 119. Mg(2+) is bound at residue aspartate 117. Substrate contacts are provided by residues serine 162–aspartate 164, arginine 199, methionine 206–arginine 208, glutamate 263, arginine 291, and histidine 297–arginine 300. The active-site Proton acceptor is aspartate 164. An interdomain linker region spans residues proline 390–methionine 403. Residues arginine 404–alanine 783 form a C-terminal regulatory PFK domain 2 region. Residues arginine 480, threonine 537–asparagine 541, arginine 575, glutamine 582–glycine 584, glutamate 642, arginine 668, histidine 674–glutamine 677, and arginine 749 each bind beta-D-fructose 2,6-bisphosphate.

The protein belongs to the phosphofructokinase type A (PFKA) family. ATP-dependent PFK group I subfamily. Eukaryotic two domain clade 'E' sub-subfamily. As to quaternary structure, homotetramer. The cofactor is Mg(2+).

The protein resides in the cytoplasm. It carries out the reaction beta-D-fructose 6-phosphate + ATP = beta-D-fructose 1,6-bisphosphate + ADP + H(+). It participates in carbohydrate degradation; glycolysis; D-glyceraldehyde 3-phosphate and glycerone phosphate from D-glucose: step 3/4. Allosterically activated by ADP, AMP, or fructose 2,6-bisphosphate, and allosterically inhibited by ATP or citrate. Functionally, catalyzes the phosphorylation of D-fructose 6-phosphate to fructose 1,6-bisphosphate by ATP, the first committing step of glycolysis. This chain is ATP-dependent 6-phosphofructokinase (pfkA), found in Aspergillus niger.